Consider the following 364-residue polypeptide: Anhydro-N-acetylmuramic acid kinase (364 aa).

Residue 11 to 18 (GSSLDGID) coordinates ATP.

The protein belongs to the anhydro-N-acetylmuramic acid kinase family.

The enzyme catalyses 1,6-anhydro-N-acetyl-beta-muramate + ATP + H2O = N-acetyl-D-muramate 6-phosphate + ADP + H(+). It participates in amino-sugar metabolism; 1,6-anhydro-N-acetylmuramate degradation. The protein operates within cell wall biogenesis; peptidoglycan recycling. In terms of biological role, catalyzes the specific phosphorylation of 1,6-anhydro-N-acetylmuramic acid (anhMurNAc) with the simultaneous cleavage of the 1,6-anhydro ring, generating MurNAc-6-P. Is required for the utilization of anhMurNAc either imported from the medium or derived from its own cell wall murein, and thus plays a role in cell wall recycling. This chain is Anhydro-N-acetylmuramic acid kinase, found in Pseudomonas syringae pv. tomato (strain ATCC BAA-871 / DC3000).